The following is a 294-amino-acid chain: Sulfotransferase 1E1 (294 aa).

Residue 47–52 (KSGTTW) participates in 3'-phosphoadenylyl sulfate binding. Position 105–107 (105–107 (KTH)) interacts with substrate. Residue H107 is the Proton acceptor of the active site. 3'-phosphoadenylyl sulfate is bound by residues R129, S137, Y192, 226-231 (TSFQEM), and 256-258 (RKG).

Belongs to the sulfotransferase 1 family. Homodimer. As to expression, liver, intestine and at lower level in the kidney.

The protein localises to the cytoplasm. It localises to the cytosol. The catalysed reaction is estrone + 3'-phosphoadenylyl sulfate = estrone 3-sulfate + adenosine 3',5'-bisphosphate + H(+). It carries out the reaction (24S)-hydroxycholesterol + 3'-phosphoadenylyl sulfate = (24S)-hydroxycholesterol 3-sulfate + adenosine 3',5'-bisphosphate + H(+). It catalyses the reaction 17beta-estradiol + 3'-phosphoadenylyl sulfate = 17beta-estradiol 3-sulfate + adenosine 3',5'-bisphosphate + H(+). The enzyme catalyses 3beta-hydroxyandrost-5-en-17-one + 3'-phosphoadenylyl sulfate = dehydroepiandrosterone 3-sulfate + adenosine 3',5'-bisphosphate + H(+). The catalysed reaction is 4-ethylphenol + 3'-phosphoadenylyl sulfate = 4-ethylphenyl sulfate + adenosine 3',5'-bisphosphate + H(+). Inhibited by estradiol. Its function is as follows. Sulfotransferase that utilizes 3'-phospho-5'-adenylyl sulfate (PAPS) as sulfonate donor to catalyze the sulfate conjugation of estradiol and estrone. Is a key enzyme in estrogen homeostasis, the sulfation of estrogens leads to their inactivation. Also sulfates dehydroepiandrosterone (DHEA), pregnenolone, (24S)-hydroxycholesterol and xenobiotic compounds like ethinylestradiol, equalenin, diethyl stilbesterol and 1-naphthol at significantly lower efficiency. Does not sulfonate cortisol, testosterone and dopamine. May play a role in gut microbiota-host metabolic interaction. O-sulfonates 4-ethylphenol (4-EP), a dietary tyrosine-derived metabolite produced by gut bacteria. The product 4-EPS crosses the blood-brain barrier and may negatively regulate oligodendrocyte maturation and myelination, affecting the functional connectivity of different brain regions associated with the limbic system. This Homo sapiens (Human) protein is Sulfotransferase 1E1 (SULT1E1).